Reading from the N-terminus, the 283-residue chain is MAHKSIVIFSVLAVLCHSASVKVPPIVDSSLPVKFSEVIAEPAPNVPSNLASYAYALDIYVQTTLSQLQCIKQAGYCAVFVRAYNPAGQGSFDTSSCVTIQNAYKAGLGIEIYMTPQPVSNKQGYQQLDEIIQGLTARAITVRAIWIQVTSPTNWPNNANSNINFINSIVSRARQSGLTVGIYTSYYDWNQITTGWSNIGNDVLLWYWNVYSGGVTGETPANFNDFRKFGCWTAPSVKQFAQDETVCGITVNRDVYLAGNVLKAVEEDGKIYAGGFVQGSLKI.

A signal peptide spans 1–18 (MAHKSIVIFSVLAVLCHS). The Ch-type lysozyme domain occupies 53-273 (YAYALDIYVQ…AVEEDGKIYA (221 aa)).

It belongs to the glycosyl hydrolase 25 family. Expressed in intestine. Expressed in rectal gland cells and head neurons.

In terms of biological role, plays a role in resistance to Gram-positive bacteria B.thuringiensis and M.nematophilum and Gram-negative bacteria S.boydii or S.flexneri infection and to fungus C.neoformans infection. Plays a role in susceptibility to Gram-negative bacterium S.typhimurium infection. The protein is Lysozyme-like protein 7 of Caenorhabditis elegans.